A 77-amino-acid chain; its full sequence is Conotoxin Bt6.6 (77 aa).

Positions 1-19 (MEKLTILLLVAAVLMSTQA) are cleaved as a signal peptide. The propeptide occupies 20–38 (LIQSDGEKRQQAKINFLSX). 3 disulfide bridges follow: Cys-51–Cys-65, Cys-58–Cys-69, and Cys-64–Cys-74.

Belongs to the conotoxin O2 superfamily. Expressed by the venom duct.

It is found in the secreted. This Conus betulinus (Beech cone) protein is Conotoxin Bt6.6.